Here is a 445-residue protein sequence, read N- to C-terminus: Trigger factor (445 aa).

A PPIase FKBP-type domain is found at 172–257 (GDQVVINFVG…VKSVNWAHLP (86 aa)).

Belongs to the FKBP-type PPIase family. Tig subfamily.

The protein resides in the cytoplasm. It carries out the reaction [protein]-peptidylproline (omega=180) = [protein]-peptidylproline (omega=0). In terms of biological role, involved in protein export. Acts as a chaperone by maintaining the newly synthesized protein in an open conformation. Functions as a peptidyl-prolyl cis-trans isomerase. This is Trigger factor from Polynucleobacter necessarius subsp. necessarius (strain STIR1).